Reading from the N-terminus, the 103-residue chain is MPNQRIRIRLKAFDHKLIDQSTAEIVETAKRTGAQVSGPIPLPTRKERYTILTSPHVNKDARDQYEIRTHKRLVDIIEPTDKTVDALMRLDLAAGVDVQISLG.

This sequence belongs to the universal ribosomal protein uS10 family. As to quaternary structure, part of the 30S ribosomal subunit.

Its function is as follows. Involved in the binding of tRNA to the ribosomes. The polypeptide is Small ribosomal subunit protein uS10 (Pseudoalteromonas atlantica (strain T6c / ATCC BAA-1087)).